Here is a 487-residue protein sequence, read N- to C-terminus: Siroheme synthase (487 aa).

Residues 1–203 (MNTFPLFFKL…GRSVEAEQAL (203 aa)) form a precorrin-2 dehydrogenase /sirohydrochlorin ferrochelatase region. Residues 22–23 (EV) and 43–44 (PQ) contribute to the NAD(+) site. A Phosphoserine modification is found at S128. The uroporphyrinogen-III C-methyltransferase stretch occupies residues 229–487 (GEVYIVGAGP…DQQAHALNML (259 aa)). Position 238 (P238) interacts with S-adenosyl-L-methionine. D261 (proton acceptor) is an active-site residue. Residue K283 is the Proton donor of the active site. S-adenosyl-L-methionine contacts are provided by residues 314-316 (GGD), V319, 344-345 (TA), M396, and A425.

This sequence in the N-terminal section; belongs to the precorrin-2 dehydrogenase / sirohydrochlorin ferrochelatase family. The protein in the C-terminal section; belongs to the precorrin methyltransferase family.

It catalyses the reaction uroporphyrinogen III + 2 S-adenosyl-L-methionine = precorrin-2 + 2 S-adenosyl-L-homocysteine + H(+). The enzyme catalyses precorrin-2 + NAD(+) = sirohydrochlorin + NADH + 2 H(+). The catalysed reaction is siroheme + 2 H(+) = sirohydrochlorin + Fe(2+). Its pathway is cofactor biosynthesis; adenosylcobalamin biosynthesis; precorrin-2 from uroporphyrinogen III: step 1/1. It functions in the pathway cofactor biosynthesis; adenosylcobalamin biosynthesis; sirohydrochlorin from precorrin-2: step 1/1. The protein operates within porphyrin-containing compound metabolism; siroheme biosynthesis; precorrin-2 from uroporphyrinogen III: step 1/1. It participates in porphyrin-containing compound metabolism; siroheme biosynthesis; siroheme from sirohydrochlorin: step 1/1. Its pathway is porphyrin-containing compound metabolism; siroheme biosynthesis; sirohydrochlorin from precorrin-2: step 1/1. Functionally, multifunctional enzyme that catalyzes the SAM-dependent methylations of uroporphyrinogen III at position C-2 and C-7 to form precorrin-2 via precorrin-1. Then it catalyzes the NAD-dependent ring dehydrogenation of precorrin-2 to yield sirohydrochlorin. Finally, it catalyzes the ferrochelation of sirohydrochlorin to yield siroheme. This is Siroheme synthase from Psychrobacter sp. (strain PRwf-1).